The primary structure comprises 479 residues: Cardiolipin synthase A (479 aa).

The next 2 helical transmembrane spans lie at 8 to 28 and 38 to 58; these read FFGY…LHAV and IAWA…YLIF. PLD phosphodiesterase domains lie at 218 to 245 and 392 to 419; these read VNFR…GDEY and QPGF…DNRS. Residues histidine 223, lysine 225, aspartate 230, histidine 397, lysine 399, and aspartate 404 contribute to the active site.

It belongs to the phospholipase D family. Cardiolipin synthase subfamily. ClsA sub-subfamily.

The protein localises to the cell inner membrane. It catalyses the reaction 2 a 1,2-diacyl-sn-glycero-3-phospho-(1'-sn-glycerol) = a cardiolipin + glycerol. Functionally, catalyzes the reversible phosphatidyl group transfer from one phosphatidylglycerol molecule to another to form cardiolipin (CL) (diphosphatidylglycerol) and glycerol. This chain is Cardiolipin synthase A, found in Pseudomonas entomophila (strain L48).